The chain runs to 91 residues: Acylphosphatase (91 aa).

The Acylphosphatase-like domain occupies 5–91; sequence RAHLRIYGRV…EGLEGFKVVG (87 aa). Active-site residues include R20 and N38.

It belongs to the acylphosphatase family.

The enzyme catalyses an acyl phosphate + H2O = a carboxylate + phosphate + H(+). This Thermococcus kodakarensis (strain ATCC BAA-918 / JCM 12380 / KOD1) (Pyrococcus kodakaraensis (strain KOD1)) protein is Acylphosphatase (acyP).